Reading from the N-terminus, the 691-residue chain is Solute carrier family 28 member 3 (691 aa).

The tract at residues 1–78 (MELRSTAAPR…HMEDDDEEMQ (78 aa)) is disordered. Residues 1–102 (MELRSTAAPR…FCRKHKTTLR (102 aa)) are Cytoplasmic-facing. Residues 21–30 (NEENFLENEN) show a composition bias toward low complexity. Residues 31–42 (TSGNNSIRSRAV) are compositionally biased toward polar residues. Positions 43–54 (QSREHTNTKQDE) are enriched in basic and acidic residues. The helical transmembrane segment at 103–123 (HIIWGILLAGYLVMVISACVL) threads the bilayer. Residues 124-128 (NFHRA) lie on the Extracellular side of the membrane. The chain crosses the membrane as a helical span at residues 129–149 (LPLFVITVAAIFFVVWDHLMA). Topologically, residues 150 to 173 (KYEHRIDEMLSPGRRLLNSHWFWL) are cytoplasmic. A helical membrane pass occupies residues 174–194 (KWVIWSSLVLAVIFWLAFDTA). Topologically, residues 195–197 (KLG) are extracellular. A helical transmembrane segment spans residues 198–219 (QQQLVSFGGLIMYIVLLFLFSK). The Cytoplasmic segment spans residues 220–227 (YPTRVYWR). A helical transmembrane segment spans residues 228-247 (PVLWGIGLQFLLGLLILRTD). At 248-284 (PGFIAFDWLGRQVQTFLEYTDAGASFVFGEKYKDHFF) the chain is on the extracellular side. The helical transmembrane segment at 285-305 (AFKVLPIVVFFSTVMSMLYYL) threads the bilayer. The Cytoplasmic portion of the chain corresponds to 306–329 (GLMQWIIRKVGWIMLVTTGSSPIE). Residues 330–348 (SVVASGNIFVGQTESPLLV) constitute an intramembrane region (helical). Residues 349–361 (RPYLPYITKSELH) are Cytoplasmic-facing. A helical membrane pass occupies residues 362-384 (AIMTAGFSTIAGSVLGAYISFGV). Residues 385 to 386 (PS) lie on the Extracellular side of the membrane. The helical transmembrane segment at 387–408 (SHLLTASVMSAPASLAAAKLFW) threads the bilayer. Topologically, residues 409–443 (PETEKPKITLKNAMKMESGDSGNLLEAATQGASSS) are cytoplasmic. A helical membrane pass occupies residues 444–469 (ISLVANIAVNLIAFLALLSFMNSALS). The Extracellular segment spans residues 470–507 (WFGNMFDYPQLSFELICSYIFMPFSFMMGVEWQDSFMV). Positions 508-527 (ARLIGYKTFFNEFVAYEHLS) form an intramembrane region, helical. At 528–566 (KWIHLRKEGGPKFVNGVQQYISIRSEIIATYALCGFANI) the chain is on the extracellular side. A helical transmembrane segment spans residues 567 to 577 (GSLGIVIGGLT). The Cytoplasmic portion of the chain corresponds to 578 to 590 (SMAPSRKRDIASG). Residues 591–613 (AVRALIAGTVACFMTACIAGILS) traverse the membrane as a helical segment. Over 614 to 691 (STPVDINCHH…FNCNGISNTF (78 aa)) the chain is Extracellular.

This sequence belongs to the concentrative nucleoside transporter (CNT) (TC 2.A.41) family. In terms of assembly, homotrimer. In terms of tissue distribution, expressed in pancreas, bone marrow, trachea, mammary gland, liver, prostate, and regions of intestine, brain, lung, placenta, testis, kidney, and heart.

Its subcellular location is the cell membrane. It localises to the endoplasmic reticulum membrane. The catalysed reaction is thymidine(out) + 2 Na(+)(out) = thymidine(in) + 2 Na(+)(in). It catalyses the reaction cytidine(out) + 2 Na(+)(out) = cytidine(in) + 2 Na(+)(in). The enzyme catalyses uridine(out) + 2 Na(+)(out) = uridine(in) + 2 Na(+)(in). It carries out the reaction adenosine(out) + 2 Na(+)(out) = adenosine(in) + 2 Na(+)(in). The catalysed reaction is guanosine(out) + 2 Na(+)(out) = guanosine(in) + 2 Na(+)(in). It catalyses the reaction inosine(out) + 2 Na(+)(out) = inosine(in) + 2 Na(+)(in). Sodium-dependent, pyrimidine- and purine-selective. Involved in the homeostasis of endogenous nucleosides. Exhibits the transport characteristics of the nucleoside transport system cib or N3 subtype (N3/cib) (with marked transport of both thymidine and inosine). Employs a 2:1 sodium/nucleoside ratio. Transports uridine. Also able to transport gemcitabine, 3'-azido-3'-deoxythymidine (AZT), ribavirin and 3-deazauridine. This is Solute carrier family 28 member 3 (SLC28A3) from Homo sapiens (Human).